Here is a 102-residue protein sequence, read N- to C-terminus: Putative lipid-transfer protein DIR1 (102 aa).

An N-terminal signal peptide occupies residues Met1–Val25. Cystine bridges form between Cys30–Cys67, Cys40–Cys56, Cys57–Cys94, and Cys69–Cys102. An a 1-acyl-sn-glycero-3-phosphocholine-binding site is contributed by Gln34. Glu36 contacts Zn(2+). Residue Asn38 participates in a 1-acyl-sn-glycero-3-phosphocholine binding. Residue His62 participates in Zn(2+) binding.

Belongs to the A9/FIL1 family. In terms of assembly, self-interacts and binds to AZI1. Does not interact with PDLP1. Requires Zn(2+) as cofactor.

It localises to the secreted. The protein localises to the extracellular space. Its subcellular location is the apoplast. It is found in the endoplasmic reticulum. The protein resides in the cell junction. It localises to the plasmodesma. Putative lipid transfer protein required for systemic acquired resistance (SAR) long distance signaling. May interact with a lipid-derived molecule to promote long distance signaling associated with SAR. Together with AZI1, required for glycerol-3-phosphate- (G3P) and azelaic acid- (AA) induced systemic acquired resistance (SAR). Component of plant systemic immunity involved in priming defenses in a AA-dependent manner, by modulating production and/or translocation of a mobile signal(s) during SAR. Is able to bind with high affinity monoacylated phospholipids, mainly lysophosphatidylcholines. This is Putative lipid-transfer protein DIR1 (DIR1) from Arabidopsis thaliana (Mouse-ear cress).